A 119-amino-acid chain; its full sequence is Holo-[acyl-carrier-protein] synthase (119 aa).

Aspartate 8 and glutamate 58 together coordinate Mg(2+).

It belongs to the P-Pant transferase superfamily. AcpS family. Mg(2+) serves as cofactor.

The protein localises to the cytoplasm. The enzyme catalyses apo-[ACP] + CoA = holo-[ACP] + adenosine 3',5'-bisphosphate + H(+). Its function is as follows. Transfers the 4'-phosphopantetheine moiety from coenzyme A to a Ser of acyl-carrier-protein. In Bacillus cereus (strain ATCC 14579 / DSM 31 / CCUG 7414 / JCM 2152 / NBRC 15305 / NCIMB 9373 / NCTC 2599 / NRRL B-3711), this protein is Holo-[acyl-carrier-protein] synthase.